The chain runs to 312 residues: Bark storage protein A (312 aa).

Positions 1 to 24 are cleaved as a signal peptide; it reads MPQQSMQASLIDPIAEIERSNCKI. Residue N70 is glycosylated (N-linked (GlcNAc...) asparagine).

This sequence to wound-inducible poplar endochitinases. In terms of assembly, monomer. As to expression, bark.

Functionally, may play a role in nitrogen storage. In Populus deltoides (Eastern poplar), this protein is Bark storage protein A (BSPA).